Consider the following 83-residue polypeptide: MKASMFLALAGLVLLFVVCYASESEEKEFPRELISKIFAVDDFKGEVRECKGFGKSCVPGKNECCSGYACNSRDKWCKVLLGK.

The first 21 residues, 1–21 (MKASMFLALAGLVLLFVVCYA), serve as a signal peptide directing secretion. Residues 22–48 (SESEEKEFPRELISKIFAVDDFKGEVR) constitute a propeptide that is removed on maturation. Cystine bridges form between cysteine 50–cysteine 65, cysteine 57–cysteine 70, and cysteine 64–cysteine 77. Leucine amide is present on leucine 81.

This sequence belongs to the neurotoxin 10 (Hwtx-1) family. 14 (Hntx-1) subfamily. Monomer. In terms of tissue distribution, expressed by the venom gland.

The protein resides in the secreted. In terms of biological role, weakly blocks the rat SCN2A/SCN1B (Nav1.2/beta-1) sodium channel (IC(50)=68 uM) and the insect sodium channel para/tipE (IC(50)=4.3 uM), without altering the activation or inactivation kinetics (depressant toxin). The chain is Mu-theraphotoxin-Hhn2b 3 from Cyriopagopus hainanus (Chinese bird spider).